We begin with the raw amino-acid sequence, 7081 residues long: Leucine-rich repeat transmembrane protein CCDC168 (7081 aa).

A helical membrane pass occupies residues 37 to 57 (WVAIFFIILLGIIFEIILMKA). 2 LRR repeats span residues 233–256 (PCPL…VRNQ) and 420–445 (NAEF…SVKA). Positions 717-745 (EDLQSSENSHLQLSNGEELPTSTPKTQRC) are disordered. The segment covering 718–742 (DLQSSENSHLQLSNGEELPTSTPKT) has biased composition (polar residues). The stretch at 865-890 (ADTLRIIRLSHSASKQEKLPDEKETQ) is one LRR 3 repeat. Residues 943–1009 (QISSGSSKAP…DPKNPLTMPE (67 aa)) form a disordered region. Residues 958 to 970 (VQPQTLSTQTILE) are compositionally biased toward polar residues. Positions 981 to 999 (QVEKVKQSTDRPTDRESAG) are enriched in basic and acidic residues. The stretch at 1050 to 1075 (LPAVALGSFNNHLLTLPYFKRQEIKK) is one LRR 4 repeat. Composition is skewed to polar residues over residues 1274–1286 (KCTA…SPIS) and 1295–1304 (LNQTRESYIP). The interval 1274-1304 (KCTADSETPSPISGKSLIGDPLNQTRESYIP) is disordered. An LRR 5 repeat occupies 1501–1527 (NCLTLELHINGQRLQHQTGFEQTTLET). Basic and acidic residues-rich tracts occupy residues 1773-1784 (ETEKDTLREKRL) and 1793-1804 (TSPHEDSITSRD). Disordered regions lie at residues 1773 to 1804 (ETEK…TSRD), 1954 to 1973 (KSPH…ESGS), 2008 to 2031 (STHQ…EGRS), and 2083 to 2103 (TGKS…NPRR). Residues 1964–1973 (ANLTDMESGS) show a composition bias toward polar residues. Residues 2373 to 2397 (KNQINTIQLSERKIILNPKCLTMKE) form an LRR 6 repeat. A disordered region spans residues 2637-2680 (GRHSPASEEMKRQNGRLKMADRSSPQGRPLQAKQSAVSQSPDTA). A compositionally biased stretch (polar residues) spans 2668 to 2678 (AKQSAVSQSPD). LRR repeat units follow at residues 2727-2749 (SKIH…KTRA), 2832-2855 (IQQQ…VYDS), 2862-2889 (IKKL…KLEK), 3433-3458 (LSSR…RLEW), and 3630-3653 (ILSL…NVKS). The interval 3730–3756 (SLSHSNSNSRTKAGKDKSGTLKGCLPP) is disordered. One copy of the LRR 12 repeat lies at 3875-3898 (MRGITRFCLSSSTQQELSDTMEKC). Disordered regions lie at residues 4119–4260 (ELSH…DGDK), 4293–4428 (QGII…KQET), 4729–4756 (QESL…LLPQ), 4794–4817 (SPLS…QDRT), 4831–4859 (MPSL…RLAN), 4928–4955 (GVQE…YLNC), 4966–4985 (LGKT…SDSG), and 5191–5212 (QKVK…SPLH). 6 stretches are compositionally biased toward basic and acidic residues: residues 4121 to 4133 (SHQK…EKAD), 4147 to 4176 (KAKD…DKGL), 4192 to 4245 (EPGK…EQQK), 4329 to 4361 (QKAK…DLKG), 4375 to 4401 (EPGK…NRDG), and 4415 to 4426 (EQEKRDGHKSKQ). Residues 4731–4743 (SLPSRQTAPTKPT) are compositionally biased toward polar residues. Composition is skewed to basic and acidic residues over residues 4746 to 4756 (LVKKEKQLLPQ) and 4798 to 4817 (KRKE…QDRT). Over residues 5203 to 5212 (KSPSRSSPLH) the composition is skewed to polar residues. An LRR 13 repeat occupies 5311-5336 (LSQLELDKETHLGNEMLRLKRPILRR). Residues 5467 to 5496 (LPDTEKTADAEARSGDVRKGKPHRSQKENR) form a disordered region. The segment covering 5469–5496 (DTEKTADAEARSGDVRKGKPHRSQKENR) has biased composition (basic and acidic residues). The stretch at 5522 to 5545 (LNAKELVLNINKLEKKVHKDKDEA) is one LRR 14 repeat. Disordered stretches follow at residues 5564 to 5583 (LDSG…SSCP) and 5763 to 5792 (QQET…SNDR). Over residues 5779-5792 (KFDKPKEDGQSNDR) the composition is skewed to basic and acidic residues. LRR repeat units lie at residues 5901–5924 (KQAL…LFPP), 6259–6282 (PDLR…ECPS), 6419–6442 (HLES…SLQM), 6552–6575 (HFSV…SYAM), and 6613–6637 (QIDL…TFPK). Disordered stretches follow at residues 6859 to 6878 (CKSH…SPDW) and 6916 to 6950 (APLT…RSDL). Residues 6860-6871 (KSHKSRKYRSSS) show a composition bias toward basic residues. Residues 6937–6950 (HPESQERKKARSDL) show a composition bias toward basic and acidic residues. The LRR 20 repeat unit spans residues 7012-7036 (NRPFFFACVPADSLEVIPKTIRWTI).

Its subcellular location is the membrane. This Homo sapiens (Human) protein is Leucine-rich repeat transmembrane protein CCDC168.